Consider the following 501-residue polypeptide: Cytochrome P450 90A3 (501 aa).

Residues 2-22 form a helical membrane-spanning segment; that stretch reads AAAALLLLAAAAAIVVVAMVL. Cysteine 446 serves as a coordination point for heme.

The protein belongs to the cytochrome P450 family. Heme is required as a cofactor. In terms of tissue distribution, highly expressed in shoot apex and inflorenscence. Expressed in roots, stems, leaf blades and leaf sheaths.

It is found in the membrane. It functions in the pathway plant hormone biosynthesis; brassinosteroid biosynthesis. In terms of biological role, catalyzes the C23-alpha-hydroxylation step in brassinosteroid biosynthesis. Converts 6-deoxocathasterone (6-deoxoCT) to 6-deoxoteasterone (6-deoxoTE) in the late C6-oxidation pathway and cathasterone (CT) to teasterone (TE) in the early C6-oxidation pathway of brassinolide (BL) biosynthesis. In Oryza sativa subsp. japonica (Rice), this protein is Cytochrome P450 90A3.